The primary structure comprises 437 residues: Probable receptor-like serine/threonine-protein kinase At4g34500 (437 aa).

Residues 25–45 (LVIAICSVFILLISLLIFLFV) form a helical membrane-spanning segment. One can recognise a Protein kinase domain in the interval 145 to 426 (FSDDNMIGEG…MLEAEDFPFR (282 aa)). ATP contacts are provided by residues 151–159 (IGEGGYGVV) and K173. Y220 carries the post-translational modification Phosphotyrosine. Catalysis depends on D273, which acts as the Proton acceptor. The residue at position 277 (S277) is a Phosphoserine. Phosphothreonine occurs at positions 307 and 312. Phosphotyrosine is present on Y320.

This sequence belongs to the protein kinase superfamily. Ser/Thr protein kinase family.

The protein localises to the cell membrane. The catalysed reaction is L-seryl-[protein] + ATP = O-phospho-L-seryl-[protein] + ADP + H(+). It catalyses the reaction L-threonyl-[protein] + ATP = O-phospho-L-threonyl-[protein] + ADP + H(+). This is Probable receptor-like serine/threonine-protein kinase At4g34500 from Arabidopsis thaliana (Mouse-ear cress).